The chain runs to 246 residues: Enolase-phosphatase E1 (246 aa).

Residues D15 and E17 each coordinate Mg(2+). Substrate contacts are provided by residues 134–135 and K174; that span reads SS. D201 provides a ligand contact to Mg(2+).

Belongs to the HAD-like hydrolase superfamily. MasA/MtnC family. As to quaternary structure, monomer. It depends on Mg(2+) as a cofactor.

The protein resides in the cytoplasm. It is found in the nucleus. The catalysed reaction is 5-methylsulfanyl-2,3-dioxopentyl phosphate + H2O = 1,2-dihydroxy-5-(methylsulfanyl)pent-1-en-3-one + phosphate. It functions in the pathway amino-acid biosynthesis; L-methionine biosynthesis via salvage pathway; L-methionine from S-methyl-5-thio-alpha-D-ribose 1-phosphate: step 3/6. It participates in amino-acid biosynthesis; L-methionine biosynthesis via salvage pathway; L-methionine from S-methyl-5-thio-alpha-D-ribose 1-phosphate: step 4/6. In terms of biological role, bifunctional enzyme that catalyzes the enolization of 2,3-diketo-5-methylthiopentyl-1-phosphate (DK-MTP-1-P) into the intermediate 2-hydroxy-3-keto-5-methylthiopentenyl-1-phosphate (HK-MTPenyl-1-P), which is then dephosphorylated to form the acireductone 1,2-dihydroxy-3-keto-5-methylthiopentene (DHK-MTPene). The polypeptide is Enolase-phosphatase E1 (Debaryomyces hansenii (strain ATCC 36239 / CBS 767 / BCRC 21394 / JCM 1990 / NBRC 0083 / IGC 2968) (Yeast)).